The following is a 615-amino-acid chain: MSEGQINLAMVWSRVLDNLDNNSLPPQHRAWLPQTRPLGLIEDTALLAAPNEFAKEILETRLRTVISQALSAELGREIRVAVTVDPSAVPPSAPTEEASSTSSPDSSHPAPDQGSASYSGPRDTARQQAWSQQPVLPDPQPTAPQFTPSGRPGPLPGEPFSRGPDLLSSGWNPSSADPGSPASPAPVAESDTGPRYQSWDTSAPHWDQPNRWETPRPWEGGPHPGAGNRPHDVGGDSGVPSAEQPPVTPPLGVTERGDGSTNPTSGGPDQLNPKYTFDTFVIGSSNRFAHAAAVAVAEAPAKAYNPLFVYGGSGLGKTHLLHAIGHYTQRLYEGARVRYVSSEEFTNEFINSIRDGKADGFRRRYRDIDVLLVDDIQFLENKEQTQEEFFHTFNTLHNSNKQIVISSDRPPKQLVTLEDRLRNRFEWGLITDVQPPELETRIAILRKKAAQEGLNAPPEVLEFIASKISTNIRELEGALIRVTAFASLNRQSVDLHLTSIVLRDLIPNDEVPEITAAEIMAQTASYFGLTPEDLCGTSRSRVLVTARQIAMYLCRELTDLSLPKIGQQFGRDHTTVMHADRKIRSLMAERRSIYNQVTELTNRIKQQAHHNHHHL.

Positions 1–88 (MSEGQINLAM…RVAVTVDPSA (88 aa)) are domain I, interacts with DnaA modulators. Residues 85–272 (DPSAVPPSAP…PTSGGPDQLN (188 aa)) form a disordered region. A domain II region spans residues 88–269 (AVPPSAPTEE…STNPTSGGPD (182 aa)). Composition is skewed to low complexity over residues 94–112 (PTEEASSTSSPDSSHPAPD) and 173–190 (PSSADPGSPASPAPVAES). A domain III, AAA+ region region spans residues 270 to 486 (QLNPKYTFDT…GALIRVTAFA (217 aa)). G314, G316, K317, and T318 together coordinate ATP. The segment at 487-615 (SLNRQSVDLH…QQAHHNHHHL (129 aa)) is domain IV, binds dsDNA.

The protein belongs to the DnaA family. Oligomerizes as a right-handed, spiral filament on DNA at oriC.

It localises to the cytoplasm. Its function is as follows. Plays an essential role in the initiation and regulation of chromosomal replication. ATP-DnaA binds to the origin of replication (oriC) to initiate formation of the DNA replication initiation complex once per cell cycle. Binds the DnaA box (a 9 base pair repeat at the origin) and separates the double-stranded (ds)DNA. Forms a right-handed helical filament on oriC DNA; dsDNA binds to the exterior of the filament while single-stranded (ss)DNA is stabiized in the filament's interior. The ATP-DnaA-oriC complex binds and stabilizes one strand of the AT-rich DNA unwinding element (DUE), permitting loading of DNA polymerase. After initiation quickly degrades to an ADP-DnaA complex that is not apt for DNA replication. Binds acidic phospholipids. This chain is Chromosomal replication initiator protein DnaA, found in Thermobifida fusca (strain YX).